A 293-amino-acid chain; its full sequence is MNNIDKIEKDIMYMNPIDSKFFFKPTVINDNNNNNNINNINNINNNYTKINNYNNLINTNINNKNNSNSNSVFSQPDQAATITNISNPCTLASPTPSSPSNNKLLMIQRDDMEKDINDYSNLNFDPHQMSKPSYHHHSHSHSHHSHSHSHSQNSHYLNNLQLQNLQNFQQQHQQKPISPPPSSLNIVVNRNRFFENSDPNFSYFSHNESNISDFFYNYVHYDHNFNFNENSFIFNTNNNNNNNNEINNSVIGNDILQTVPPSPTPTPPPPPQQQQFTQIKNTNYIFVPQQLKQ.

Disordered stretches follow at residues 121-154 (NLNF…SQNS) and 254-274 (DILQ…PQQQ). Over residues 133–149 (SYHHHSHSHSHHSHSHS) the composition is skewed to basic residues. Pro residues predominate over residues 260–272 (PPSPTPTPPPPPQ).

This is an uncharacterized protein from Dictyostelium discoideum (Social amoeba).